We begin with the raw amino-acid sequence, 303 residues long: 5-dehydro-4-deoxyglucarate dehydratase (303 aa).

The protein belongs to the DapA family.

It carries out the reaction 5-dehydro-4-deoxy-D-glucarate + H(+) = 2,5-dioxopentanoate + CO2 + H2O. Its pathway is carbohydrate acid metabolism; D-glucarate degradation; 2,5-dioxopentanoate from D-glucarate: step 2/2. The chain is 5-dehydro-4-deoxyglucarate dehydratase from Pseudomonas putida (Arthrobacter siderocapsulatus).